The following is a 76-amino-acid chain: Small ribosomal subunit protein bS18 (76 aa).

Belongs to the bacterial ribosomal protein bS18 family. In terms of assembly, part of the 30S ribosomal subunit. Forms a tight heterodimer with protein bS6.

Binds as a heterodimer with protein bS6 to the central domain of the 16S rRNA, where it helps stabilize the platform of the 30S subunit. In Methylococcus capsulatus (strain ATCC 33009 / NCIMB 11132 / Bath), this protein is Small ribosomal subunit protein bS18.